Here is a 176-residue protein sequence, read N- to C-terminus: MILANDELKKLISTGRLKVDPLYPDTIRENGLDLRIGGEYAIYAYEGVVIKPCELESARHLFRVVKADEVVIPPRNFALLTTEEYVKMPDDVVGFANLRSTLARYGLVIPPTIVDAGFEGNITIEVVNETPNTIVLRRGMRFLHLVLAKTEGRAQYSGLYQGQRGVTPPKGLKNEC.

DCTP contacts are provided by residues 99 to 104 and Asp-115; that span reads RSTLAR. The active-site Proton donor/acceptor is Glu-125. Residue Gln-163 coordinates dCTP.

Belongs to the dCTP deaminase family. In terms of assembly, homotrimer.

It carries out the reaction dCTP + H2O + H(+) = dUTP + NH4(+). The protein operates within pyrimidine metabolism; dUMP biosynthesis; dUMP from dCTP (dUTP route): step 1/2. Catalyzes the deamination of dCTP to dUTP. The protein is dCTP deaminase of Pyrobaculum aerophilum (strain ATCC 51768 / DSM 7523 / JCM 9630 / CIP 104966 / NBRC 100827 / IM2).